The chain runs to 373 residues: 3-isopropylmalate dehydrogenase (373 aa).

Residue 82-93 (GPKWGTGAVRPE) participates in NAD(+) binding. Substrate contacts are provided by Arg-100, Arg-110, Arg-139, and Asp-231. Positions 231 and 260 each coordinate Mg(2+). Residue 295–306 (GSAPDLPENKVN) participates in NAD(+) binding.

It belongs to the isocitrate and isopropylmalate dehydrogenases family. Homodimer. Mg(2+) serves as cofactor. The cofactor is Mn(2+).

It localises to the cytoplasm. It catalyses the reaction (2R,3S)-3-isopropylmalate + NAD(+) = 4-methyl-2-oxopentanoate + CO2 + NADH. It functions in the pathway amino-acid biosynthesis; L-leucine biosynthesis; L-leucine from 3-methyl-2-oxobutanoate: step 3/4. Functionally, catalyzes the oxidation of 3-carboxy-2-hydroxy-4-methylpentanoate (3-isopropylmalate) to 3-carboxy-4-methyl-2-oxopentanoate. The product decarboxylates to 4-methyl-2 oxopentanoate. The polypeptide is 3-isopropylmalate dehydrogenase (LEU2) (Scheffersomyces stipitis (strain ATCC 58785 / CBS 6054 / NBRC 10063 / NRRL Y-11545) (Yeast)).